The following is a 286-amino-acid chain: Nucleotide-binding protein HAPS_0087 (286 aa).

Residue 8–15 (GRSGSGKS) participates in ATP binding. 56–59 (DVRN) serves as a coordination point for GTP.

It belongs to the RapZ-like family.

In terms of biological role, displays ATPase and GTPase activities. The sequence is that of Nucleotide-binding protein HAPS_0087 from Glaesserella parasuis serovar 5 (strain SH0165) (Haemophilus parasuis).